Reading from the N-terminus, the 374-residue chain is Wnt inhibitory factor 1 (374 aa).

The signal sequence occupies residues 1–28 (MSLTGYFAAPLCSIFLFILAHADAGQQE). In terms of domain architecture, WIF spans 33-172 (MWIDAHQARV…PQNAIFFKTC (140 aa)). A glycan (N-linked (GlcNAc...) asparagine) is linked at Asn83. 7 cysteine pairs are disulfide-bonded: Cys135–Cys172, Cys177–Cys187, Cys181–Cys193, Cys195–Cys204, Cys209–Cys219, Cys213–Cys225, and Cys227–Cys236. EGF-like domains follow at residues 173-205 (QQAK…PHCE), 208-237 (LCMP…INCD), 237-269 (DKVN…EQCE), 270-301 (TSKC…DLCS), and 302-333 (KPVC…RYCN). The N-linked (GlcNAc...) asparagine glycan is linked to Asn240. 9 cysteine pairs are disulfide-bonded: Cys241-Cys251, Cys245-Cys257, Cys259-Cys268, Cys273-Cys283, Cys277-Cys289, Cys291-Cys300, Cys305-Cys315, Cys309-Cys321, and Cys323-Cys332. The disordered stretch occupies residues 343–374 (ALRPTGSRNRQHTPSPKRTEDRQALPESNYIW). Residues 348-358 (GSRNRQHTPSP) show a composition bias toward polar residues.

As to expression, during somatogenesis, expressed predominantly in unsegmented paraxial presomitic mesoderm and, to a much lesser extent, in newly segmented somites.

It localises to the secreted. In terms of biological role, binds to WNT proteins and inhibits their activities. May be involved in mesoderm segmentation. The protein is Wnt inhibitory factor 1 (wif1) of Xenopus laevis (African clawed frog).